Here is a 134-residue protein sequence, read N- to C-terminus: Small ribosomal subunit protein uS11 (134 aa).

Belongs to the universal ribosomal protein uS11 family. As to quaternary structure, component of the small ribosomal subunit.

The protein localises to the cytoplasm. The sequence is that of Small ribosomal subunit protein uS11 (RPS14) from Encephalitozoon cuniculi (strain GB-M1) (Microsporidian parasite).